The sequence spans 330 residues: Solute carrier family 25 member 16 (330 aa).

Solcar repeat units lie at residues 32–118 (FYWL…YKTL), 126–214 (SGHV…LKSV), and 236–326 (LKTH…MKQF). 6 consecutive transmembrane segments (helical) span residues 33–52 (YWLRSFLAGGIAGCCAKTTV), 95–112 (GAMMIRIFPYGAIQFMAF), 132–149 (LMAGSMAGMTAVICTYPL), 189–209 (GLMPTILGMAPYAGVSFFTFG), 242–262 (LLCGGVAGAIAQTISYPFDVT), and 297–317 (GLYRGLSLNYIRCVPSQAVAF).

The protein belongs to the mitochondrial carrier (TC 2.A.29) family. As to expression, mostly in thyroid, liver, lung, kidney and to a lesser extent in heart and skeletal muscle.

The protein resides in the mitochondrion inner membrane. Functionally, may be involved in the transport of coenzyme A in the mitochondrial matrix. Very little is known about the physiological function of this carrier. The chain is Solute carrier family 25 member 16 (SLC25A16) from Bos taurus (Bovine).